Here is a 412-residue protein sequence, read N- to C-terminus: Tyrosine--tRNA ligase (412 aa).

Residues P50–H59 carry the 'HIGH' region motif. The short motif at K244–S248 is the 'KMSKS' region element. Position 247 (K247) interacts with ATP. The region spanning V348–E411 is the S4 RNA-binding domain.

It belongs to the class-I aminoacyl-tRNA synthetase family. TyrS type 2 subfamily. As to quaternary structure, homodimer.

It is found in the cytoplasm. It carries out the reaction tRNA(Tyr) + L-tyrosine + ATP = L-tyrosyl-tRNA(Tyr) + AMP + diphosphate + H(+). Its function is as follows. Catalyzes the attachment of tyrosine to tRNA(Tyr) in a two-step reaction: tyrosine is first activated by ATP to form Tyr-AMP and then transferred to the acceptor end of tRNA(Tyr). In Prochlorococcus marinus (strain MIT 9312), this protein is Tyrosine--tRNA ligase.